A 565-amino-acid polypeptide reads, in one-letter code: DNA-dependent metalloprotease SPRTN (565 aa).

Residues 23-130 (RALFLEFNDT…RTGANISVYH (108 aa)) enclose the SprT-like domain. His-88 lines the Zn(2+) pocket. Glu-89 is a catalytic residue. Zn(2+)-binding residues include His-92 and His-107. The interval 191–219 (EPENYPQKRKRKNDPTISEVNSSSHVKGK) is disordered. Over residues 205–215 (PTISEVNSSSH) the composition is skewed to polar residues. The SHP-box signature appears at 231-239 (FSGTGYKLF). The PIP-box signature appears at 288 to 295 (STPAQSIL). The tract at residues 349–389 (TLPSPSIQSTSQKPQKDISFGFTLPSQSFPSTSPGSNSENK) is disordered. Composition is skewed to polar residues over residues 351-361 (PSPSIQSTSQK) and 372-386 (LPSQ…GSNS). The UBZ4-type 1 zinc finger occupies 436–463 (KVSCPVCGTEVLECKINDHLDTCTSSGP). The Zn(2+) site is built by Cys-439, Cys-442, His-454, and Cys-458. Positions 476–499 (QSFPSTSQGSNSAIKEPLYKKLQI) match the Nuclear localization signal motif. A UBZ4-type 2 zinc finger spans residues 537-564 (KVCCPVCGTDVLQDKINDHLDTCLQNCN). Zn(2+) contacts are provided by Cys-540, Cys-543, His-555, and Cys-559.

Belongs to the Spartan family. In terms of assembly, homodimer. Requires Zn(2+) as cofactor. In terms of processing, autocatalytically cleaved in response to double-stranded DNA-binding: autocatalytic cleavage takes place in trans and leads to inactivation.

Its subcellular location is the nucleus. The protein resides in the chromosome. DNA-binding activates the protease activity: single-stranded DNA-binding specifically activates ability to cleave covalent DNA-protein cross-links (DPCs). In contrast, double-stranded DNA-binding specifically activates autocatalytic cleavage, and subsequent inactivation. DNA-dependent metalloendopeptidase that mediates the proteolytic cleavage of covalent DNA-protein cross-links (DPCs) during DNA synthesis, thereby playing a key role in maintaining genomic integrity. DPCs are highly toxic DNA lesions that interfere with essential chromatin transactions, such as replication and transcription, and which are induced by reactive agents, such as UV light or formaldehyde. Associates with the DNA replication machinery and specifically removes DPCs during DNA synthesis. Catalyzes proteolytic cleavage of the hmces DNA-protein cross-link following unfolding by the brip1/fancj helicase. Acts as a pleiotropic protease for DNA-binding proteins cross-linked with DNA, such as top1, top2a, histones H3 and H4. Mediates degradation of DPCs that are not ubiquitinated, while it is not able to degrade ubiquitinated DPCs. SPRTN activation requires polymerase collision with DPCs followed by helicase bypass of DPCs. May also act as a 'reader' of ubiquitinated pcna: facilitates chromatin association of rad18 and is required for efficient pcna monoubiquitination, promoting a feed-forward loop to enhance pcna ubiquitination and translesion DNA synthesis. Acts as a regulator of translesion DNA synthesis by recruiting vcp/p97 to sites of DNA damage. This Xenopus laevis (African clawed frog) protein is DNA-dependent metalloprotease SPRTN.